Here is a 705-residue protein sequence, read N- to C-terminus: DNA ligase (705 aa).

NAD(+) contacts are provided by residues 42-46 (DADFD), 91-92 (SL), and Glu125. Catalysis depends on Lys127, which acts as the N6-AMP-lysine intermediate. NAD(+) contacts are provided by Arg148, Glu183, Lys299, and Lys323. Zn(2+)-binding residues include Cys428, Cys431, Cys446, and Cys452. Residues 626–705 (TDGSPVAGKT…DGWLALIEGL (80 aa)) form the BRCT domain.

This sequence belongs to the NAD-dependent DNA ligase family. LigA subfamily. Mg(2+) is required as a cofactor. Requires Mn(2+) as cofactor.

The enzyme catalyses NAD(+) + (deoxyribonucleotide)n-3'-hydroxyl + 5'-phospho-(deoxyribonucleotide)m = (deoxyribonucleotide)n+m + AMP + beta-nicotinamide D-nucleotide.. DNA ligase that catalyzes the formation of phosphodiester linkages between 5'-phosphoryl and 3'-hydroxyl groups in double-stranded DNA using NAD as a coenzyme and as the energy source for the reaction. It is essential for DNA replication and repair of damaged DNA. This is DNA ligase from Roseobacter denitrificans (strain ATCC 33942 / OCh 114) (Erythrobacter sp. (strain OCh 114)).